A 351-amino-acid polypeptide reads, in one-letter code: MAVTSLLDTVFRRRKKKSTEFISFFEFDLDTIKAATNDFSELVGRGGFGFVYKGRLQNGQEIAVKILSTSSIRTERQFHNELIILSKLKHKNLINLLGFCTKRDQHGLVYEFMPNSSLDCFILDPHRAAQLNWEMCRNIIDGIARGLRYLHEESGLWVVHRDIKPGNILLDSDLKPKIVGFELARTMQQGENAAETTEIVGTVGYLDPEYIRSGRVSVKSDVYAFGVTILTIISRRKAWSVDGDSLIKYVRRCWNRGEAIDVIHEVMREEEREYSISEILRYIHIALLCVDENAERRPNIDKVLHWFSCFSTPLPDPTFGNRFLVEEETNWPWSPSLSPGHSSVTSPISSR.

A Protein kinase domain is found at 37 to 287 (NDFSELVGRG…EILRYIHIAL (251 aa)). Residues 43–51 (VGRGGFGFV) and K65 each bind ATP. Y110 carries the post-translational modification Phosphotyrosine. D162 functions as the Proton acceptor in the catalytic mechanism. Phosphothreonine occurs at positions 197 and 202. Y210 bears the Phosphotyrosine mark.

It belongs to the protein kinase superfamily. Ser/Thr protein kinase family. CRK subfamily. Interacts with CRK36. Post-translationally, autophosphorylated and phosphorylated by CRK36.

It localises to the cytoplasm. Its subcellular location is the cytosol. It carries out the reaction L-seryl-[protein] + ATP = O-phospho-L-seryl-[protein] + ADP + H(+). The enzyme catalyses L-threonyl-[protein] + ATP = O-phospho-L-threonyl-[protein] + ADP + H(+). In terms of biological role, forms a complex with CRK36 that may negatively control abscisic acid (ABA) and osmotic stress signal transduction. Involved in plant response to ABA during seed germination, early seedling growth and responses to abiotic stresses by inducing the expression of ABA-responsive genes and stress-inducible genes. Acts as a positive regulator in disease resistance, downstream of NPR1 and WRKY70. The chain is Cysteine-rich receptor-like protein kinase 45 from Arabidopsis thaliana (Mouse-ear cress).